Reading from the N-terminus, the 200-residue chain is Rho GDP-dissociation inhibitor 2 (200 aa).

The segment at 1 to 40 (MTEKAPEPHVEEDDDELDGKLNYKPPPQKSLKELQEMDKD) is disordered. Threonine 2 carries the post-translational modification N-acetylthreonine. Position 20 is an N6-acetyllysine (lysine 20). A Phosphotyrosine modification is found at tyrosine 23. 5 positions are modified to N6-acetyllysine: lysine 24, lysine 39, lysine 46, lysine 101, and lysine 123. Residues 30–40 (SLKELQEMDKD) are compositionally biased toward basic and acidic residues. Phosphoserine is present on serine 144. Lysine 174 is subject to N6-acetyllysine.

Belongs to the Rho GDI family. Interacts with RHOA. Interacts with RAC1. Interacts with RAC2. Interacts with CDC42.

Its subcellular location is the cytoplasm. It localises to the cytosol. In terms of biological role, regulates the GDP/GTP exchange reaction of the Rho proteins by inhibiting the dissociation of GDP from them, and the subsequent binding of GTP to them. Regulates reorganization of the actin cytoskeleton mediated by Rho family members. This is Rho GDP-dissociation inhibitor 2 (ARHGDIB) from Bos taurus (Bovine).